A 213-amino-acid polypeptide reads, in one-letter code: MKPYQRQFIEFALNKQVLKFGEFTLKSGRKSPYFFNAGLFNTGRDLALLGRFYAEALVDSGIEFDLLFGPAYKGIPIATTTAVALAEHHDKDLPYCFNRKEAKDHGEGGSLVGSALQGRVMLVDDVITAGTAIRESMEIIQAHRATLAGVLISLDRQERGRGEISAIQEVERDYGCKVISIITLKDLIAYLEEKLDMAEHLAAVRAYREEFGV.

A 5-phospho-alpha-D-ribose 1-diphosphate-binding site is contributed by lysine 26. Phenylalanine 34 to phenylalanine 35 contacts orotate. 5-phospho-alpha-D-ribose 1-diphosphate contacts are provided by residues tyrosine 72–lysine 73, arginine 99, lysine 100, lysine 103, histidine 105, and aspartate 124–alanine 132. Orotate contacts are provided by threonine 128 and arginine 156.

It belongs to the purine/pyrimidine phosphoribosyltransferase family. PyrE subfamily. In terms of assembly, homodimer. Mg(2+) is required as a cofactor.

The catalysed reaction is orotidine 5'-phosphate + diphosphate = orotate + 5-phospho-alpha-D-ribose 1-diphosphate. The protein operates within pyrimidine metabolism; UMP biosynthesis via de novo pathway; UMP from orotate: step 1/2. In terms of biological role, catalyzes the transfer of a ribosyl phosphate group from 5-phosphoribose 1-diphosphate to orotate, leading to the formation of orotidine monophosphate (OMP). This chain is Orotate phosphoribosyltransferase, found in Salmonella paratyphi A (strain ATCC 9150 / SARB42).